Consider the following 185-residue polypeptide: Elongation factor P (185 aa).

This sequence belongs to the elongation factor P family.

Its subcellular location is the cytoplasm. Its pathway is protein biosynthesis; polypeptide chain elongation. Its function is as follows. Involved in peptide bond synthesis. Stimulates efficient translation and peptide-bond synthesis on native or reconstituted 70S ribosomes in vitro. Probably functions indirectly by altering the affinity of the ribosome for aminoacyl-tRNA, thus increasing their reactivity as acceptors for peptidyl transferase. This is Elongation factor P from Streptococcus pyogenes serotype M28 (strain MGAS6180).